The primary structure comprises 26 residues: uncharacterized protein (26 aa).

The segment covering 1–16 has biased composition (polar residues); the sequence is MPEQKANCSPNGNITV. Residues 1-26 are disordered; the sequence is MPEQKANCSPNGNITVDSMIMSLGSS.

This is an uncharacterized protein from Saccharomyces cerevisiae (strain ATCC 204508 / S288c) (Baker's yeast).